The following is a 664-amino-acid chain: Semaphorin-7A (664 aa).

The first 44 residues, 1–44 (MTPPPPGRAAPSAPRARVLSLPARFGLPLRLRLLLVFWVAAASA), serve as a signal peptide directing secretion. Residues 53–488 (RISAVWKGQD…SQWEVSQVPL (436 aa)) form the Sema domain. Residue asparagine 102 is glycosylated (N-linked (GlcNAc...) asparagine). A disulfide bridge connects residues cysteine 117 and cysteine 123. Residue arginine 132 is modified to Asymmetric dimethylarginine. Cysteines 140 and 149 form a disulfide. N-linked (GlcNAc...) asparagine glycosylation is found at asparagine 154 and asparagine 256. 7 disulfides stabilise this stretch: cysteine 264/cysteine 364, cysteine 289/cysteine 333, cysteine 491/cysteine 509, cysteine 498/cysteine 539, cysteine 501/cysteine 516, cysteine 564/cysteine 611, and cysteine 585/cysteine 594. Residues 265 to 267 (RGD) are interaction with integrins. The Cell attachment site motif lies at 265–267 (RGD). An N-linked (GlcNAc...) asparagine glycan is attached at asparagine 328. Positions 542 to 627 (PKPDEAPLQK…YLREAQHWEL (86 aa)) constitute an Ig-like C2-type domain. Asparagine 600 carries an N-linked (GlcNAc...) asparagine glycan. Residue alanine 646 is the site of GPI-anchor amidated alanine attachment. Residues 647 to 664 (ASFWLGVLPTLILGLLVH) constitute a propeptide, removed in mature form.

It belongs to the semaphorin family. As to quaternary structure, interacts with PLXNC1. Interacts with ITGA1 and ITGB1. In terms of tissue distribution, highly expressed in activated T-cells (at protein level). Highest expression in brain. Lower in heart, thymus, spleen, testis and ovary. The expression increases in late embryonic and postnatal stages. Detected in T-cells.

It localises to the cell membrane. In terms of biological role, plays an important role in integrin-mediated signaling and functions both in regulating cell migration and immune responses. Promotes formation of focal adhesion complexes, activation of the protein kinase PTK2/FAK1 and subsequent phosphorylation of MAPK1 and MAPK3. Promotes production of pro-inflammatory cytokines by monocytes and macrophages. Plays an important role in modulating inflammation and T-cell-mediated immune responses. Promotes axon growth in the embryonic olfactory bulb. Promotes attachment, spreading and dendrite outgrowth in melanocytes. This Mus musculus (Mouse) protein is Semaphorin-7A (Sema7a).